Reading from the N-terminus, the 172-residue chain is 3-hydroxydecanoyl-[acyl-carrier-protein] dehydratase (172 aa).

The active site involves histidine 71.

Belongs to the thioester dehydratase family. FabA subfamily. Homodimer.

The protein resides in the cytoplasm. The enzyme catalyses a (3R)-hydroxyacyl-[ACP] = a (2E)-enoyl-[ACP] + H2O. It catalyses the reaction (3R)-hydroxydecanoyl-[ACP] = (2E)-decenoyl-[ACP] + H2O. The catalysed reaction is (2E)-decenoyl-[ACP] = (3Z)-decenoyl-[ACP]. It participates in lipid metabolism; fatty acid biosynthesis. Functionally, necessary for the introduction of cis unsaturation into fatty acids. Catalyzes the dehydration of (3R)-3-hydroxydecanoyl-ACP to E-(2)-decenoyl-ACP and then its isomerization to Z-(3)-decenoyl-ACP. Can catalyze the dehydratase reaction for beta-hydroxyacyl-ACPs with saturated chain lengths up to 16:0, being most active on intermediate chain length. This chain is 3-hydroxydecanoyl-[acyl-carrier-protein] dehydratase, found in Brucella abortus (strain S19).